Consider the following 314-residue polypeptide: Methylglutaconyl-CoA hydratase, mitochondrial (314 aa).

A mitochondrion-targeting transit peptide spans 1 to 42; that stretch reads MAAAAPGALGALRTGRVRLVAACCARLGPAAWARGTAPRRGY. K75 carries the N6-acetyllysine; alternate modification. K75 carries the post-translational modification N6-succinyllysine; alternate. An RNA-binding region spans residues 80 to 94; it reads KNLLKMLSKAVDALK. K84 carries the post-translational modification N6-succinyllysine. N6-acetyllysine; alternate occurs at positions 88 and 119. N6-succinyllysine; alternate occurs at positions 88 and 119. K123 and K135 each carry N6-succinyllysine. N6-acetyllysine; alternate is present on residues K179 and K186. N6-succinyllysine; alternate is present on residues K179 and K186. K304 is subject to N6-succinyllysine.

It belongs to the enoyl-CoA hydratase/isomerase family. Homohexamer. As to expression, detected in heart, brain, liver, spleen, skeletal muscle and kidney. Expressed in brain, kidney, liver and spleen tissue (at protein level).

Its subcellular location is the mitochondrion. It catalyses the reaction (3S)-3-hydroxy-3-methylglutaryl-CoA = 3-methyl-(2E)-glutaconyl-CoA + H2O. The catalysed reaction is (3S)-citramalyl-CoA = itaconyl-CoA + H2O. It carries out the reaction 3-hydroxyisovaleryl-CoA = 3-methylbut-2-enoyl-CoA + H2O. The enzyme catalyses (S)-3-hydroxyglutaryl-CoA = (2E)-glutaconyl-CoA + H2O. It functions in the pathway amino-acid degradation; L-leucine degradation; (S)-3-hydroxy-3-methylglutaryl-CoA from 3-isovaleryl-CoA: step 3/3. Its function is as follows. Catalyzes the fifth step in the leucine degradation pathway, the reversible hydration of 3-methylglutaconyl-CoA (3-MG-CoA) to 3-hydroxy-3-methylglutaryl-CoA (HMG-CoA). Can catalyze the reverse reaction but at a much lower rate in vitro. HMG-CoA is then quickly degraded by another enzyme (such as HMG-CoA lyase) to give acetyl-CoA and acetoacetate. Uses other substrates such as (2E)-glutaconyl-CoA efficiently in vitro, and to a lesser extent 3-methylcrotonyl-CoA (3-methyl-(2E)-butenoyl-CoA), crotonyl-CoA ((2E)-butenoyl-CoA) and 3-hydroxybutanoyl-CoA (the missing carboxylate reduces affinity to the active site). Originally it was identified as an RNA-binding protein as it binds to AU-rich elements (AREs) in vitro. AREs direct rapid RNA degradation and mRNA deadenylation. Might have itaconyl-CoA hydratase activity, converting itaconyl-CoA into citramalyl-CoA in the C5-dicarboxylate catabolism pathway. The C5-dicarboxylate catabolism pathway is required to detoxify itaconate, an antimicrobial metabolite and immunomodulator produced by macrophages during certain infections, that can act as a vitamin B12-poisoning metabolite. This is Methylglutaconyl-CoA hydratase, mitochondrial (Auh) from Mus musculus (Mouse).